The primary structure comprises 186 residues: Ribosome-recycling factor (186 aa).

Belongs to the RRF family.

The protein localises to the cytoplasm. Responsible for the release of ribosomes from messenger RNA at the termination of protein biosynthesis. May increase the efficiency of translation by recycling ribosomes from one round of translation to another. This chain is Ribosome-recycling factor, found in Chlorobaculum parvum (strain DSM 263 / NCIMB 8327) (Chlorobium vibrioforme subsp. thiosulfatophilum).